The primary structure comprises 291 residues: Pyridoxal kinase PdxY (291 aa).

Residues serine 9 and 44–45 (TQ) each bind substrate. Residues aspartate 112, valine 144, glutamate 149, lysine 182, and 207–210 (RPHL) contribute to the ATP site. Substrate is bound at residue aspartate 221.

It belongs to the pyridoxine kinase family. PdxY subfamily. Homodimer. The cofactor is Mg(2+).

The catalysed reaction is pyridoxal + ATP = pyridoxal 5'-phosphate + ADP + H(+). Its pathway is cofactor metabolism; pyridoxal 5'-phosphate salvage; pyridoxal 5'-phosphate from pyridoxal: step 1/1. Its function is as follows. Pyridoxal kinase involved in the salvage pathway of pyridoxal 5'-phosphate (PLP). Catalyzes the phosphorylation of pyridoxal to PLP. The polypeptide is Pyridoxal kinase PdxY (Photobacterium profundum (strain SS9)).